We begin with the raw amino-acid sequence, 756 residues long: Virulence factor MDV010 (756 aa).

The first 30 residues, 1-30 (MPSKSIADHHAGYGVALAIVALLLIHGTAL), serve as a signal peptide directing secretion. The segment at 96–120 (EEHITLSSPRTSTKTTNENGHEKDS) is disordered. Residues 100–113 (TLSSPRTSTKTTNE) show a composition bias toward polar residues. 12 N-linked (GlcNAc...) asparagine; by host glycosylation sites follow: Asn222, Asn241, Asn287, Asn423, Asn495, Asn542, Asn552, Asn580, Asn660, Asn684, Asn715, and Asn744.

The protein localises to the secreted. May play a role in host immune modulation since the protein is secreted and provides an advantage for growth in vivo while it is completely dispensable in cell culture. In Gallid herpesvirus 2 (strain Chicken/Md5/ATCC VR-987) (GaHV-2), this protein is Virulence factor MDV010 (MDV010).